The sequence spans 154 residues: 6,7-dimethyl-8-ribityllumazine synthase (154 aa).

Residues Phe22, 56–58 (SFE), and 81–83 (VLI) contribute to the 5-amino-6-(D-ribitylamino)uracil site. 86 to 87 (ET) serves as a coordination point for (2S)-2-hydroxy-3-oxobutyl phosphate. His89 serves as the catalytic Proton donor. Phe114 provides a ligand contact to 5-amino-6-(D-ribitylamino)uracil. Arg128 is a binding site for (2S)-2-hydroxy-3-oxobutyl phosphate.

Belongs to the DMRL synthase family.

It catalyses the reaction (2S)-2-hydroxy-3-oxobutyl phosphate + 5-amino-6-(D-ribitylamino)uracil = 6,7-dimethyl-8-(1-D-ribityl)lumazine + phosphate + 2 H2O + H(+). Its pathway is cofactor biosynthesis; riboflavin biosynthesis; riboflavin from 2-hydroxy-3-oxobutyl phosphate and 5-amino-6-(D-ribitylamino)uracil: step 1/2. Its function is as follows. Catalyzes the formation of 6,7-dimethyl-8-ribityllumazine by condensation of 5-amino-6-(D-ribitylamino)uracil with 3,4-dihydroxy-2-butanone 4-phosphate. This is the penultimate step in the biosynthesis of riboflavin. This chain is 6,7-dimethyl-8-ribityllumazine synthase, found in Chlamydia felis (strain Fe/C-56) (Chlamydophila felis).